The sequence spans 42 residues: Potassium channel toxin gamma-KTx 1.2 (42 aa).

4 disulfide bridges follow: C5–C23, C11–C34, C20–C39, and C24–C41.

It belongs to the ergtoxin family. Gamma-KTx 1 subfamily. Expressed by the venom gland.

Its subcellular location is the secreted. Functionally, blocks Kv11/ERG potassium channels. The chain is Potassium channel toxin gamma-KTx 1.2 from Centruroides elegans (Bark scorpion).